A 199-amino-acid chain; its full sequence is uncharacterized protein (199 aa).

The stretch at 71–104 (RANATNKLTVIAEQIQHLQEQARKVLEDARRDAD) forms a coiled coil.

This is an uncharacterized protein from Mus musculus (Mouse).